The primary structure comprises 560 residues: 2-succinyl-5-enolpyruvyl-6-hydroxy-3-cyclohexene-1-carboxylate synthase (560 aa).

Belongs to the TPP enzyme family. MenD subfamily. Homodimer. Requires Mg(2+) as cofactor. The cofactor is Mn(2+). Thiamine diphosphate is required as a cofactor.

It carries out the reaction isochorismate + 2-oxoglutarate + H(+) = 5-enolpyruvoyl-6-hydroxy-2-succinyl-cyclohex-3-ene-1-carboxylate + CO2. It functions in the pathway quinol/quinone metabolism; 1,4-dihydroxy-2-naphthoate biosynthesis; 1,4-dihydroxy-2-naphthoate from chorismate: step 2/7. It participates in quinol/quinone metabolism; menaquinone biosynthesis. Catalyzes the thiamine diphosphate-dependent decarboxylation of 2-oxoglutarate and the subsequent addition of the resulting succinic semialdehyde-thiamine pyrophosphate anion to isochorismate to yield 2-succinyl-5-enolpyruvyl-6-hydroxy-3-cyclohexene-1-carboxylate (SEPHCHC). The protein is 2-succinyl-5-enolpyruvyl-6-hydroxy-3-cyclohexene-1-carboxylate synthase of Lactococcus lactis subsp. lactis (strain IL1403) (Streptococcus lactis).